The chain runs to 398 residues: uncharacterized protein (398 aa).

An N-terminal signal peptide occupies residues 1–22 (MKLKFYKLPLITTAFSFVFLTA). Residue C23 is the site of N-palmitoyl cysteine attachment. Residue C23 is the site of S-diacylglycerol cysteine attachment.

The protein localises to the cell membrane. This is an uncharacterized protein from Mycoplasma genitalium (strain ATCC 33530 / DSM 19775 / NCTC 10195 / G37) (Mycoplasmoides genitalium).